A 465-amino-acid chain; its full sequence is Methylenetetrahydrofolate--tRNA-(uracil-5-)-methyltransferase TrmFO (465 aa).

10 to 15 (GAGLAG) lines the FAD pocket.

This sequence belongs to the MnmG family. TrmFO subfamily. FAD serves as cofactor.

The protein localises to the cytoplasm. It carries out the reaction uridine(54) in tRNA + (6R)-5,10-methylene-5,6,7,8-tetrahydrofolate + NADH + H(+) = 5-methyluridine(54) in tRNA + (6S)-5,6,7,8-tetrahydrofolate + NAD(+). The enzyme catalyses uridine(54) in tRNA + (6R)-5,10-methylene-5,6,7,8-tetrahydrofolate + NADPH + H(+) = 5-methyluridine(54) in tRNA + (6S)-5,6,7,8-tetrahydrofolate + NADP(+). Catalyzes the folate-dependent formation of 5-methyl-uridine at position 54 (M-5-U54) in all tRNAs. This chain is Methylenetetrahydrofolate--tRNA-(uracil-5-)-methyltransferase TrmFO, found in Deinococcus radiodurans (strain ATCC 13939 / DSM 20539 / JCM 16871 / CCUG 27074 / LMG 4051 / NBRC 15346 / NCIMB 9279 / VKM B-1422 / R1).